A 496-amino-acid polypeptide reads, in one-letter code: MPSHSAAAFSATPSAARDGYVVAVRGAIVDVRFERDALPAVGDALVVTPDDLAPVLAEVQAHLSETMVRALALQTTAGLRRGTRVQAPGGPIETPVGEAVLGRLLDVTGATRDDGPALPAQIERRPIHRAAPPLASLKGTSTLFSTGIKVIDLLAPLAQGGKAAMFGGAGVGKTVLVMELIHAVVERYEGISVFAGVGERSREGHEMLLDMRTSGVLPRTVLVYGQMNEPPGARWRVPFTALTIAEYFRDERRQNVLLLMDNVFRFVQAGAEVSGLLGRMPSRVGYQPTLATEVASLQERIVSVGGVSVTAIEAVYVPADDFTDPAVTAIAAHLDSMVVLSRSMAAEGMYPAVDPIASSSILLDPLVVGEEHAAVATEVRRIIEHYRELQDVISLLGVEELGAEDRALVGRARRLQRFLTQPFAVTEAFTGEPGRSVALADTIAGCKAILAGECDTWQESSLYMIGTLDEGRQREAAAAQQSTAQQAAPAEKEPAA.

An ATP-binding site is contributed by 167–174 (GGAGVGKT). Residues 474–496 (REAAAAQQSTAQQAAPAEKEPAA) are disordered. The span at 476-489 (AAAAQQSTAQQAAP) shows a compositional bias: low complexity.

The protein belongs to the ATPase alpha/beta chains family. In terms of assembly, F-type ATPases have 2 components, CF(1) - the catalytic core - and CF(0) - the membrane proton channel. CF(1) has five subunits: alpha(3), beta(3), gamma(1), delta(1), epsilon(1). CF(0) has three main subunits: a(1), b(2) and c(9-12). The alpha and beta chains form an alternating ring which encloses part of the gamma chain. CF(1) is attached to CF(0) by a central stalk formed by the gamma and epsilon chains, while a peripheral stalk is formed by the delta and b chains.

It is found in the cell inner membrane. The catalysed reaction is ATP + H2O + 4 H(+)(in) = ADP + phosphate + 5 H(+)(out). Produces ATP from ADP in the presence of a proton gradient across the membrane. The catalytic sites are hosted primarily by the beta subunits. In Paraburkholderia xenovorans (strain LB400), this protein is ATP synthase subunit beta 1.